We begin with the raw amino-acid sequence, 627 residues long: uncharacterized protein (627 aa).

Disordered stretches follow at residues 57 to 82, 96 to 121, 160 to 184, 198 to 232, 247 to 277, 335 to 358, and 449 to 579; these read EDAM…QGED, PEAQ…APPG, GCSH…DAAY, AQSQ…CPSG, SHDA…RGAP, RQAG…EAAY, and VFDV…PPLS. The span at 169-183 shows a compositional bias: low complexity; it reads SSSDQAADAPAGDAA. Residues 336–357 show a composition bias toward low complexity; the sequence is QAGAEPAQAPATAPAPEGTEAA. Basic and acidic residues predominate over residues 450-464; sequence FDVKEQGAHADRDAA.

This is an uncharacterized protein from Treponema pallidum (strain Nichols).